Reading from the N-terminus, the 568-residue chain is MASPALISETEAWKDLKAHLEGIKRTHLRELMGDTERCQSMMVEFDNIFLDYSRQQASSDTINKLYKLADAAHLKQKIDRMYNGDHINSTENRSVLHVALRAPRNSAICSDGKNVVPDVWNVLDKIKDFSDRVRNGSWIGATGKKLKDVIAVGIGGSFLGPLFVHTALQTDPEASKNARGRELRFLANVDPIDVARNISGLNPESTLVVVVSKTFTTAETMLNARTLREWISSALGPSAVAKHMVAVSTNLPLVEKFGIDPINAFAFWDWVGGRYSVCSAVGVLPLSLQYGFAVVEKFLQGAHSIDQHFSSASFEKNIPVLLGLLSVWNVSFLGYPARAILPYSQALEKLAPHIQQVSMESNGKGVSIDGLPLPFESGEIDFGEPGTNGQHSFYQLIHQGRVIPCDFIGVVKSQQPVYLKGEVVNNHDELMSNFFAQPDALAYGKTPEQLKKENVSEHLIPHKTFTGNRPSISILLPTLDGYRIGQLLAIYEHRVAVQGFVWGINSFDQWGVELGKSLATQVRKQLHASRVKGEPVEGFNFSTKTLLERYLEATSDVPADPSTLLPNI.

The active-site Proton donor is the Glu-360. Catalysis depends on residues His-391 and Lys-516.

It belongs to the GPI family. In terms of assembly, homodimer.

The protein resides in the cytoplasm. It carries out the reaction alpha-D-glucose 6-phosphate = beta-D-fructose 6-phosphate. It functions in the pathway carbohydrate degradation; glycolysis; D-glyceraldehyde 3-phosphate and glycerone phosphate from D-glucose: step 2/4. This Clarkia arcuata (Glandular clarkia) protein is Glucose-6-phosphate isomerase, cytosolic 1 (PGIC1).